The chain runs to 129 residues: UPF0325 protein YE3288 (129 aa).

The protein belongs to the UPF0325 family.

This chain is UPF0325 protein YE3288, found in Yersinia enterocolitica serotype O:8 / biotype 1B (strain NCTC 13174 / 8081).